We begin with the raw amino-acid sequence, 479 residues long: F-box protein At5g51380 (479 aa).

Residues 1-20 (MTFREKMPTSPKSPLRRRRS) are disordered. Residues 62-108 (DRTLSLSDSLLLKILEKLPESQNEDVSLVCKRWLSVQGRRLRSMKVF) form the F-box domain.

In Arabidopsis thaliana (Mouse-ear cress), this protein is F-box protein At5g51380.